The primary structure comprises 402 residues: Putative F-box protein At1g70970 (402 aa).

Residues 4-52 (SSSETLHVEDLQTEIMSWLPLKSLLRFVIVSKKWASIIRGEQFKALYLR) enclose the F-box domain.

This is Putative F-box protein At1g70970 from Arabidopsis thaliana (Mouse-ear cress).